The sequence spans 419 residues: S-adenosylmethionine synthase (419 aa).

Residue histidine 14 coordinates ATP. Aspartate 16 is a Mg(2+) binding site. A K(+)-binding site is contributed by glutamate 42. L-methionine contacts are provided by glutamate 55 and glutamine 98. Residues 98 to 108 are flexible loop; the sequence is QSQDIYQGVDR. Residues 164–166, 242–243, aspartate 251, 257–258, alanine 274, and lysine 278 each bind ATP; these read DSK, KF, and RK. Aspartate 251 contacts L-methionine. Lysine 282 serves as a coordination point for L-methionine.

This sequence belongs to the AdoMet synthase family. As to quaternary structure, homotetramer; dimer of dimers. Mg(2+) serves as cofactor. K(+) is required as a cofactor.

It localises to the cytoplasm. The catalysed reaction is L-methionine + ATP + H2O = S-adenosyl-L-methionine + phosphate + diphosphate. The protein operates within amino-acid biosynthesis; S-adenosyl-L-methionine biosynthesis; S-adenosyl-L-methionine from L-methionine: step 1/1. Functionally, catalyzes the formation of S-adenosylmethionine (AdoMet) from methionine and ATP. The overall synthetic reaction is composed of two sequential steps, AdoMet formation and the subsequent tripolyphosphate hydrolysis which occurs prior to release of AdoMet from the enzyme. In Christiangramia forsetii (strain DSM 17595 / CGMCC 1.15422 / KT0803) (Gramella forsetii), this protein is S-adenosylmethionine synthase.